The following is a 490-amino-acid chain: Probable G-protein coupled receptor npr-8 (490 aa).

The Extracellular portion of the chain corresponds to 1-55; that stretch reads MEVKDIDNYCDRGISPNASNYLTYPFDGLCLQKFFYQLQTSLRRFTPYEEIIYTT. A glycan (N-linked (GlcNAc...) asparagine) is linked at N17. Residues 56-76 traverse the membrane as a helical segment; the sequence is VYIIISVAAVIGNGLVIMAVV. At 77–86 the chain is on the cytoplasmic side; the sequence is RKKTMRTNRN. Residues 87–107 form a helical membrane-spanning segment; it reads VLILNLALSNLILAITNIPFL. Residues 108 to 125 lie on the Extracellular side of the membrane; sequence WLPSIDFEFPYSRFFCKF. A helical membrane pass occupies residues 126 to 146; that stretch reads ANVLPGSNIYCSTLTISVMAI. Residues 147-166 lie on the Cytoplasmic side of the membrane; it reads DRYYSVKKLKIASNRKQCFH. A helical membrane pass occupies residues 167–187; that stretch reads AVLVSLAIWIVSFILSLPLLL. Residues 188-236 lie on the Extracellular side of the membrane; it reads YYETSMLYVMREIRVVDQSGQEVIRSYGWRQCRLVSAGRLPDITQSIQL. The chain crosses the membrane as a helical span at residues 237 to 257; it reads LMSILQVAFLYIVPLFVLSIF. Residues 258–331 are Cytoplasmic-facing; that stretch reads NVKLTRFLKT…QRTNRTTSLL (74 aa). Positions 272-322 are disordered; sequence MSKTRAPPKRFDRSDSHHNSLKNNNNHTSSLRSPSMPSIRSSITERNKTNQ. The span at 280–289 shows a compositional bias: basic and acidic residues; it reads KRFDRSDSHH. Residues 292 to 313 show a composition bias toward low complexity; it reads LKNNNNHTSSLRSPSMPSIRSS. A helical membrane pass occupies residues 332-352; sequence IAMAGSYAALWFPFTLITFLI. Topologically, residues 353–374 are extracellular; it reads DFELIINQDYVNLVERIDQTCK. Residues 375–395 form a helical membrane-spanning segment; it reads MVSMLSICVNPFLYGFLNTNF. The Cytoplasmic portion of the chain corresponds to 396–490; sequence RHEFSDIYYR…DDDIEKDSFV (95 aa).

It belongs to the G-protein coupled receptor 1 family.

It localises to the cell membrane. Functionally, not known. Putative receptor. This is Probable G-protein coupled receptor npr-8 from Caenorhabditis elegans.